The chain runs to 89 residues: RNA-binding protein Hfq (89 aa).

One can recognise a Sm domain in the interval 14–73; that stretch reads DPYLNALRKEKINVAIYLVNGVKLQGRVDSFDQFVVLLRSNVTQMVYKHAISTIVPARDP.

The protein belongs to the Hfq family. In terms of assembly, homohexamer.

RNA chaperone that binds small regulatory RNA (sRNAs) and mRNAs to facilitate mRNA translational regulation in response to envelope stress, environmental stress and changes in metabolite concentrations. Also binds with high specificity to tRNAs. This is RNA-binding protein Hfq from Hydrogenovibrio crunogenus (strain DSM 25203 / XCL-2) (Thiomicrospira crunogena).